A 557-amino-acid chain; its full sequence is Dicarboxylate transporter 1, chloroplastic (557 aa).

The N-terminal 69 residues, 1–69 (MASLALSGSC…STLVKASSTV (69 aa)), are a transit peptide targeting the chloroplast. 12 helical membrane-spanning segments follow: residues 90–110 (AAIK…FVPV), 122–142 (LAIF…LGAV), 158–178 (FAAA…LAFF), 229–249 (AGGI…SNVG), 256–276 (LGSW…SMFL), 305–325 (AAIV…YLIY), 355–375 (IMAA…KLGV), 376–396 (DAVT…VVTW), 411–431 (WFAA…IEWF), 438–458 (FVGG…LLYF), 477–497 (AFLS…LVLA), and 531–551 (YGFL…GAWW).

The protein belongs to the SLC13A/DASS transporter (TC 2.A.47) family. DIT1 subfamily. Expressed in roots, rosette and cauline leaves, stems, flowers and siliques.

The protein resides in the plastid. The protein localises to the chloroplast inner membrane. Its function is as follows. 2-oxoglutarate/malate translocator involved with DIT2-1 in primary ammonia assimilation and in the re-assimilation of ammonia generated by the photorespiratory pathway. Imports 2-oxoglutarate into plastids as precursor for ammonia assimilation. 2-oxoglutarate is converted to glutamate, the end product of ammonia assimilation, which is exported to the cytosol by DIT2-1. The polypeptide is Dicarboxylate transporter 1, chloroplastic (DIT1) (Arabidopsis thaliana (Mouse-ear cress)).